The sequence spans 394 residues: Proliferation-associated protein 2G4 (394 aa).

S2 bears the N-acetylserine mark. Position 2 is a phosphoserine (S2). The interval 2–48 (SGEDEQQEQTIAEDLVVTKYKMGGDIANRVLRSLVEASSSGVSVLSL) is necessary for nucleolar localization. Residues 46–54 (LSLCEKGDA) form an RNA-binding region. K298 participates in a covalent cross-link: Glycyl lysine isopeptide (Lys-Gly) (interchain with G-Cter in SUMO2). A necessary for nucleolar localization region spans residues 301–394 (LLQPFNVLYE…ETLEENGAGD (94 aa)). S335 bears the Phosphoserine mark. Residues 358-394 (LQSSASRKTQKKKKKKASKTVENATSGETLEENGAGD) are disordered. Position 361 is a phosphoserine; by PKC/PRKCD (S361). Positions 361–375 (SASRKTQKKKKKKAS) are interaction with RNA. The span at 365–375 (KTQKKKKKKAS) shows a compositional bias: basic residues. Residues T366 and T386 each carry the phosphothreonine modification.

Belongs to the peptidase M24 family. In terms of assembly, isoform 2 interacts with the cytoplasmic domain of non-phosphorylated ERBB3; the interaction requires PKC activity. Interacts with AR. Treatment with HRG leads to dissociation from ERBB3 and increases association with AR. Interacts with nucleolin/NCL. Component of a ribonucleoprotein complex containing at least PA2G4, NCL, TOP1, PABPC2, RPLP0, acetylated histone H1 (HIST1H1A or H1F1), histone H1 2/4, RPL4, RPL8, RPL15, RPL18, RPL18A, RPL21, RPL11, RPL12, RPL28, RPL27, RPLP2 and RPL24. Interacts with HDAC2. Interacts with RB1; the interaction is enhanced upon PA2G4 dephosphorylation. Interacts with AKT1. Isoform 1 and isoform 2 interact with RNF20. Isoform 2 interacts with HUWE1. Interacts with DNAJC21. In terms of processing, phosphorylated on serine and threonine residues. Phosphorylation is enhanced by HRG treatment. Basal phosphorylation is PKC-dependent and HRG-induced phosphorylation is predominantly PKC-independent. Phosphorylation at Ser-361 by PKC/PRKCD regulates its nucleolar localization. Post-translationally, isoform 2 is polyubiquitinated, leading to proteasomal degradation and phosphorylation by PKC/PRKCD enhances polyubiquitination. Widely expressed.

The protein localises to the cytoplasm. It localises to the nucleus. Its subcellular location is the nucleolus. Functionally, may play a role in a ERBB3-regulated signal transduction pathway. Seems be involved in growth regulation. Acts a corepressor of the androgen receptor (AR) and is regulated by the ERBB3 ligand neuregulin-1/heregulin (HRG). Inhibits transcription of some E2F1-regulated promoters, probably by recruiting histone acetylase (HAT) activity. Binds RNA. Associates with 28S, 18S and 5.8S mature rRNAs, several rRNA precursors and probably U3 small nucleolar RNA. May be involved in regulation of intermediate and late steps of rRNA processing. May be involved in ribosome assembly. Mediates cap-independent translation of specific viral IRESs (internal ribosomal entry site). Together with PTBP1 is required for the translation initiation on the foot-and-mouth disease virus (FMDV) IRES. Regulates cell proliferation, differentiation, and survival. Isoform 1 suppresses apoptosis whereas isoform 2 promotes cell differentiation. The sequence is that of Proliferation-associated protein 2G4 (Pa2g4) from Mus musculus (Mouse).